The primary structure comprises 253 residues: Ribonuclease HII (253 aa).

The RNase H type-2 domain maps to 70–253; that stretch reads PLVAGIDEVG…RSFSPVQNAL (184 aa). 3 residues coordinate a divalent metal cation: aspartate 76, glutamate 77, and aspartate 168.

The protein belongs to the RNase HII family. Mn(2+) serves as cofactor. Requires Mg(2+) as cofactor.

The protein localises to the cytoplasm. The catalysed reaction is Endonucleolytic cleavage to 5'-phosphomonoester.. Functionally, endonuclease that specifically degrades the RNA of RNA-DNA hybrids. The sequence is that of Ribonuclease HII from Latilactobacillus sakei subsp. sakei (strain 23K) (Lactobacillus sakei subsp. sakei).